Reading from the N-terminus, the 261-residue chain is Calcium-binding protein 8 (261 aa).

A disordered region spans residues 1–39 (MRLPEQPGEGKPENEKKGDGGALGGGEEPPRSQAPDFPT). Topologically, residues 1–234 (MRLPEQPGEG…QNRQTCVRKS (234 aa)) are cytoplasmic. Residues 8–19 (GEGKPENEKKGD) are compositionally biased toward basic and acidic residues. 2 EF-hand domains span residues 78–113 (EELD…LGYM) and 114–149 (PSEV…KLVS). Positions 91, 93, 95, 102, 127, 129, 131, 133, and 138 each coordinate Ca(2+). A helical; Anchor for type IV membrane protein transmembrane segment spans residues 235 to 255 (LICAFAMAFIISVMLIAANQI). Residues 256–261 (LRSGME) lie on the Extracellular side of the membrane.

In terms of assembly, interacts with PI4KB. This binding competes with FREQ/NCS1 binding in a calcium-dependent manner. As to expression, brain specific.

It localises to the golgi apparatus. The protein resides in the trans-Golgi network membrane. The protein localises to the cytoplasm. Its subcellular location is the perinuclear region. It is found in the cell membrane. Functionally, negatively regulates Golgi-to-plasma membrane trafficking by interacting with PI4KB and inhibiting its activity. May play a role in the physiology of neurons and is potentially important in memory and learning. This Homo sapiens (Human) protein is Calcium-binding protein 8 (CALN1).